Consider the following 310-residue polypeptide: Retrotransposon Gag-like protein 4 (310 aa).

The CCHC-type zinc finger occupies 278 to 295; sequence QLCLYCSQSGHFTRDCLA.

In terms of biological role, involved in cognitive function in the brain, possibly via the noradrenergic system. The protein is Retrotransposon Gag-like protein 4 of Homo sapiens (Human).